Reading from the N-terminus, the 324-residue chain is Adenine deaminase (324 aa).

His11, His13, and His189 together coordinate Zn(2+). The active-site Proton donor is the Glu192. Position 270 (Asp270) interacts with Zn(2+). Position 271 (Asp271) interacts with substrate.

It belongs to the metallo-dependent hydrolases superfamily. Adenosine and AMP deaminases family. Adenine deaminase type 2 subfamily. It depends on Zn(2+) as a cofactor.

The catalysed reaction is adenine + H2O + H(+) = hypoxanthine + NH4(+). Catalyzes the hydrolytic deamination of adenine to hypoxanthine. Plays an important role in the purine salvage pathway and in nitrogen catabolism. The polypeptide is Adenine deaminase (Sinorhizobium medicae (strain WSM419) (Ensifer medicae)).